We begin with the raw amino-acid sequence, 78 residues long: Large ribosomal subunit protein bL28 (78 aa).

It belongs to the bacterial ribosomal protein bL28 family.

The chain is Large ribosomal subunit protein bL28 from Methylobacillus flagellatus (strain ATCC 51484 / DSM 6875 / VKM B-1610 / KT).